The chain runs to 238 residues: Leucine-rich repeat-containing protein 57 (238 aa).

LRR repeat units follow at residues 10-36 (LETS…LQKL), 37-62 (TANL…SFQH), 64-82 (KSFT…DIGK), 83-106 (LKKL…IGQL), 108-128 (SLRT…GLGT), 129-152 (LRQL…VAEL), 154-173 (AIEI…EVSR), and 174-199 (TPRL…ILTD).

This is Leucine-rich repeat-containing protein 57 (lrrc57) from Danio rerio (Zebrafish).